Here is a 196-residue protein sequence, read N- to C-terminus: Large ribosomal subunit protein uL18 (196 aa).

The protein belongs to the universal ribosomal protein uL18 family. Part of the 50S ribosomal subunit. Contacts the 5S and 23S rRNAs.

This is one of the proteins that bind and probably mediate the attachment of the 5S RNA into the large ribosomal subunit, where it forms part of the central protuberance. This is Large ribosomal subunit protein uL18 from Saccharolobus islandicus (strain Y.N.15.51 / Yellowstone #2) (Sulfolobus islandicus).